We begin with the raw amino-acid sequence, 291 residues long: Elongation factor Ts (291 aa).

The segment at 80 to 83 (TDFV) is involved in Mg(2+) ion dislocation from EF-Tu.

The protein belongs to the EF-Ts family.

Its subcellular location is the cytoplasm. In terms of biological role, associates with the EF-Tu.GDP complex and induces the exchange of GDP to GTP. It remains bound to the aminoacyl-tRNA.EF-Tu.GTP complex up to the GTP hydrolysis stage on the ribosome. This is Elongation factor Ts from Acinetobacter baylyi (strain ATCC 33305 / BD413 / ADP1).